A 204-amino-acid polypeptide reads, in one-letter code: Heart- and neural crest derivatives-expressed protein 1 (204 aa).

3 disordered regions span residues 1–24 (MNLVGSYAHHHHHHHHHHHPHPAH), 57–115 (APDF…RTES), and 172–204 (LKKADGGRESKRKRELQQHEGFPPALGPGEKRD). 2 stretches are compositionally biased toward basic residues: residues 8–22 (AHHHHHHHHHHHPHP) and 98–110 (LGRRKGSGPKKER). One can recognise a bHLH domain in the interval 100–152 (RRKGSGPKKERRRTESINSAFAELRECIPNVPADTKLSKIKTLRLATSYIAYL). Thr113 carries the post-translational modification Phosphothreonine; by PLK4. Ser115 is modified (phosphoserine; by PLK4).

As to quaternary structure, efficient DNA binding requires dimerization with another bHLH protein. Forms homodimers and heterodimers with TCF3 gene products E12 and E47, HAND2 and HEY1, HEY2 and HEYL (hairy-related transcription factors). Interacts with MDFIC. Interacts with SOX15; the interaction enhances HAND1-induced differentiation of trophoblast giant cells. In terms of processing, phosphorylation by PLK4 disrupts the interaction with MDFIC and leads to translocation into the nucleoplasm, allowing dimerization and transcription factor activity.

The protein localises to the nucleus. Its subcellular location is the nucleoplasm. It is found in the nucleolus. Transcription factor that plays an essential role in both trophoblast giant cell differentiation and in cardiac morphogenesis. Binds the DNA sequence 5'-NRTCTG-3' (non-canonical E-box). Acts as a transcriptional repressor of SOX15. In the adult, could be required for ongoing expression of cardiac-specific genes. The sequence is that of Heart- and neural crest derivatives-expressed protein 1 (HAND1) from Ovis aries (Sheep).